The primary structure comprises 261 residues: uncharacterized protein (261 aa).

Ile-22–Phe-46 lines the NADP(+) pocket. Ser-153 contacts substrate. The active-site Proton acceptor is Tyr-166.

This sequence belongs to the short-chain dehydrogenases/reductases (SDR) family.

This is an uncharacterized protein from Escherichia coli (strain K12).